Consider the following 663-residue polypeptide: Methionine--tRNA ligase (663 aa).

Positions 10-20 match the 'HIGH' region motif; that stretch reads AYTNGPLHLGH. Residues Cys142, Cys145, Cys154, and Cys157 each coordinate Zn(2+). Residues 323–327 carry the 'KMSKS' region motif; the sequence is KMSTS. Thr326 is a binding site for ATP. In terms of domain architecture, tRNA-binding spans 563–663; sequence YFGNVDLRVG…RDLPVGSKIH (101 aa).

The protein belongs to the class-I aminoacyl-tRNA synthetase family. MetG type 1 subfamily. In terms of assembly, homodimer. Zn(2+) is required as a cofactor.

Its subcellular location is the cytoplasm. The enzyme catalyses tRNA(Met) + L-methionine + ATP = L-methionyl-tRNA(Met) + AMP + diphosphate. Is required not only for elongation of protein synthesis but also for the initiation of all mRNA translation through initiator tRNA(fMet) aminoacylation. This is Methionine--tRNA ligase from Methanococcus maripaludis (strain C7 / ATCC BAA-1331).